Reading from the N-terminus, the 360-residue chain is UDP-3-O-acylglucosamine N-acyltransferase (360 aa).

His-256 (proton acceptor) is an active-site residue. The disordered stretch occupies residues 341 to 360 (EGSGAETAARPDDDRDEGRG). Residues 349-360 (ARPDDDRDEGRG) are compositionally biased toward basic and acidic residues.

This sequence belongs to the transferase hexapeptide repeat family. LpxD subfamily. As to quaternary structure, homotrimer.

It carries out the reaction a UDP-3-O-[(3R)-3-hydroxyacyl]-alpha-D-glucosamine + a (3R)-hydroxyacyl-[ACP] = a UDP-2-N,3-O-bis[(3R)-3-hydroxyacyl]-alpha-D-glucosamine + holo-[ACP] + H(+). The protein operates within bacterial outer membrane biogenesis; LPS lipid A biosynthesis. In terms of biological role, catalyzes the N-acylation of UDP-3-O-acylglucosamine using 3-hydroxyacyl-ACP as the acyl donor. Is involved in the biosynthesis of lipid A, a phosphorylated glycolipid that anchors the lipopolysaccharide to the outer membrane of the cell. This chain is UDP-3-O-acylglucosamine N-acyltransferase, found in Rhodopseudomonas palustris (strain TIE-1).